A 431-amino-acid polypeptide reads, in one-letter code: Histidinol dehydrogenase (431 aa).

Residues Tyr130, Gln192, and Asn215 each contribute to the NAD(+) site. Positions 238, 260, and 263 each coordinate substrate. The Zn(2+) site is built by Gln260 and His263. Catalysis depends on proton acceptor residues Glu328 and His329. 4 residues coordinate substrate: His329, Asp362, Glu416, and His421. A Zn(2+)-binding site is contributed by Asp362. His421 serves as a coordination point for Zn(2+).

This sequence belongs to the histidinol dehydrogenase family. Requires Zn(2+) as cofactor.

It catalyses the reaction L-histidinol + 2 NAD(+) + H2O = L-histidine + 2 NADH + 3 H(+). It functions in the pathway amino-acid biosynthesis; L-histidine biosynthesis; L-histidine from 5-phospho-alpha-D-ribose 1-diphosphate: step 9/9. Catalyzes the sequential NAD-dependent oxidations of L-histidinol to L-histidinaldehyde and then to L-histidine. In Thermosynechococcus vestitus (strain NIES-2133 / IAM M-273 / BP-1), this protein is Histidinol dehydrogenase.